The primary structure comprises 254 residues: Phosphomannomutase (254 aa).

D16 serves as the catalytic Nucleophile. Mg(2+)-binding residues include D16 and D18. The active-site Proton donor/acceptor is D18. R25, R129, R140, R147, S185, and D187 together coordinate alpha-D-mannose 1-phosphate. The Mg(2+) site is built by D216, Y228, D230, and T233.

The protein belongs to the eukaryotic PMM family. Homodimer.

Its subcellular location is the cytoplasm. The catalysed reaction is alpha-D-mannose 1-phosphate = D-mannose 6-phosphate. Its pathway is nucleotide-sugar biosynthesis; GDP-alpha-D-mannose biosynthesis; alpha-D-mannose 1-phosphate from D-fructose 6-phosphate: step 2/2. Its function is as follows. Involved in the synthesis of the GDP-mannose and dolichol-phosphate-mannose required for a number of critical mannosyl transfer reactions. Required for maintaining N-linked glycoprotein glycosylation at the neuromuscular junction (NMJ) synaptomatrix, and thus acts in multiple pathways that prevent NMJ structural overgrowth, restrict synaptic bouton differentiation, and limit NMJ neurotransmission strength, in order to maintain viability, coordinate movement, and in adults ensure correct wing positioning. Acts in the NMJ trans-synaptic Wg pathway via glycosylation of synaptic Mmp2 which enables dlp/wg signaling during development. This chain is Phosphomannomutase, found in Drosophila melanogaster (Fruit fly).